The chain runs to 204 residues: MGSIGNGRNGSEVGIQIPAMGNKEVLERPAIPRWPRLGVVMVATRAVALVMAVLSMALMISAKQRGSLKIFGIEIPLYANWSFSDSLEYLVGMSAVSAAYCLAQLLLTAHKAVKNAPVVQSRNYAWLLFTGDQIFAYAMMSAGSAAAAVANLNRTGIRHTALPNFCKPLPRFCDLSAASIACAFLSCIFLAASAVIDVIWLSNM.

The Cytoplasmic segment spans residues 1 to 39; the sequence is MGSIGNGRNGSEVGIQIPAMGNKEVLERPAIPRWPRLGV. Residues 40-60 traverse the membrane as a helical segment; that stretch reads VMVATRAVALVMAVLSMALMI. The Extracellular portion of the chain corresponds to 61–88; that stretch reads SAKQRGSLKIFGIEIPLYANWSFSDSLE. Residue Asn-80 is glycosylated (N-linked (GlcNAc...) asparagine). The helical transmembrane segment at 89 to 109 threads the bilayer; the sequence is YLVGMSAVSAAYCLAQLLLTA. At 110-124 the chain is on the cytoplasmic side; the sequence is HKAVKNAPVVQSRNY. The chain crosses the membrane as a helical span at residues 125 to 145; it reads AWLLFTGDQIFAYAMMSAGSA. The Extracellular portion of the chain corresponds to 146–179; sequence AAAVANLNRTGIRHTALPNFCKPLPRFCDLSAAS. An N-linked (GlcNAc...) asparagine glycan is attached at Asn-153. The helical transmembrane segment at 180 to 200 threads the bilayer; sequence IACAFLSCIFLAASAVIDVIW. Over 201-204 the chain is Cytoplasmic; it reads LSNM.

It belongs to the Casparian strip membrane proteins (CASP) family. In terms of assembly, homodimer and heterodimers.

It is found in the cell membrane. The sequence is that of CASP-like protein 3A1 from Oryza sativa subsp. indica (Rice).